A 512-amino-acid polypeptide reads, in one-letter code: Kelch repeat protein C2 (512 aa).

Residues 2–67 (ESVIFSINGE…MRWKKINITI (66 aa)) enclose the BTB domain. Kelch repeat units lie at residues 216–261 (IKHN…LHNC), 262–307 (LYII…VNDG), 309–354 (LYVI…FVND), 356–403 (IYVM…EYDG), 405–449 (IYVI…SCGD), and 452–498 (LIIA…THKS).

It belongs to the poxviruses Kelch family.

The polypeptide is Kelch repeat protein C2 (Vaccinia virus (strain Copenhagen) (VACV)).